The primary structure comprises 555 residues: Formate--tetrahydrofolate ligase (555 aa).

It belongs to the formate--tetrahydrofolate ligase family.

The enzyme catalyses (6S)-5,6,7,8-tetrahydrofolate + formate + ATP = (6R)-10-formyltetrahydrofolate + ADP + phosphate. It functions in the pathway one-carbon metabolism; tetrahydrofolate interconversion. This Porphyromonas gingivalis (strain ATCC BAA-308 / W83) protein is Formate--tetrahydrofolate ligase.